Consider the following 176-residue polypeptide: ATP synthase subunit delta (176 aa).

Belongs to the ATPase delta chain family. F-type ATPases have 2 components, F(1) - the catalytic core - and F(0) - the membrane proton channel. F(1) has five subunits: alpha(3), beta(3), gamma(1), delta(1), epsilon(1). F(0) has three main subunits: a(1), b(2) and c(10-14). The alpha and beta chains form an alternating ring which encloses part of the gamma chain. F(1) is attached to F(0) by a central stalk formed by the gamma and epsilon chains, while a peripheral stalk is formed by the delta and b chains.

The protein localises to the cell inner membrane. F(1)F(0) ATP synthase produces ATP from ADP in the presence of a proton or sodium gradient. F-type ATPases consist of two structural domains, F(1) containing the extramembraneous catalytic core and F(0) containing the membrane proton channel, linked together by a central stalk and a peripheral stalk. During catalysis, ATP synthesis in the catalytic domain of F(1) is coupled via a rotary mechanism of the central stalk subunits to proton translocation. Functionally, this protein is part of the stalk that links CF(0) to CF(1). It either transmits conformational changes from CF(0) to CF(1) or is implicated in proton conduction. The polypeptide is ATP synthase subunit delta (Aliarcobacter butzleri (strain RM4018) (Arcobacter butzleri)).